The primary structure comprises 148 residues: Large ribosomal subunit protein bL9 (148 aa).

The protein belongs to the bacterial ribosomal protein bL9 family.

Binds to the 23S rRNA. The polypeptide is Large ribosomal subunit protein bL9 (Bacillus thuringiensis subsp. konkukian (strain 97-27)).